A 571-amino-acid polypeptide reads, in one-letter code: Sulfite reductase [NADPH] hemoprotein beta-component (571 aa).

4 residues coordinate [4Fe-4S] cluster: C435, C441, C480, and C484. C484 contacts siroheme.

The protein belongs to the nitrite and sulfite reductase 4Fe-4S domain family. Alpha(8)-beta(8). The alpha component is a flavoprotein, the beta component is a hemoprotein. It depends on siroheme as a cofactor. The cofactor is [4Fe-4S] cluster.

It carries out the reaction hydrogen sulfide + 3 NADP(+) + 3 H2O = sulfite + 3 NADPH + 4 H(+). The protein operates within sulfur metabolism; hydrogen sulfide biosynthesis; hydrogen sulfide from sulfite (NADPH route): step 1/1. Functionally, component of the sulfite reductase complex that catalyzes the 6-electron reduction of sulfite to sulfide. This is one of several activities required for the biosynthesis of L-cysteine from sulfate. This is Sulfite reductase [NADPH] hemoprotein beta-component from Erwinia tasmaniensis (strain DSM 17950 / CFBP 7177 / CIP 109463 / NCPPB 4357 / Et1/99).